Consider the following 173-residue polypeptide: Large ribosomal subunit protein uL10 (173 aa).

It belongs to the universal ribosomal protein uL10 family. Part of the ribosomal stalk of the 50S ribosomal subunit. The N-terminus interacts with L11 and the large rRNA to form the base of the stalk. The C-terminus forms an elongated spine to which L12 dimers bind in a sequential fashion forming a multimeric L10(L12)X complex.

Functionally, forms part of the ribosomal stalk, playing a central role in the interaction of the ribosome with GTP-bound translation factors. The polypeptide is Large ribosomal subunit protein uL10 (Nitratidesulfovibrio vulgaris (strain ATCC 29579 / DSM 644 / CCUG 34227 / NCIMB 8303 / VKM B-1760 / Hildenborough) (Desulfovibrio vulgaris)).